Consider the following 131-residue polypeptide: Small ribosomal subunit protein uS8 (131 aa).

Belongs to the universal ribosomal protein uS8 family. As to quaternary structure, part of the 30S ribosomal subunit. Contacts proteins S5 and S12.

Its function is as follows. One of the primary rRNA binding proteins, it binds directly to 16S rRNA central domain where it helps coordinate assembly of the platform of the 30S subunit. The protein is Small ribosomal subunit protein uS8 of Helicobacter acinonychis (strain Sheeba).